Here is a 105-residue protein sequence, read N- to C-terminus: Small ribosomal subunit protein uS10 (105 aa).

The protein belongs to the universal ribosomal protein uS10 family. As to quaternary structure, part of the 30S ribosomal subunit.

Involved in the binding of tRNA to the ribosomes. The chain is Small ribosomal subunit protein uS10 from Cyanothece sp. (strain PCC 7425 / ATCC 29141).